A 332-amino-acid polypeptide reads, in one-letter code: D-xylose-binding periplasmic protein (332 aa).

Residues 1 to 23 (MKIKSALLTLVGALTVFSSSAHS) form the signal peptide.

It belongs to the bacterial solute-binding protein 2 family.

Its subcellular location is the periplasm. In terms of biological role, involved in the high-affinity D-xylose membrane transport system. Binds with high affinity to xylose. The polypeptide is D-xylose-binding periplasmic protein (xylF) (Haemophilus influenzae (strain ATCC 51907 / DSM 11121 / KW20 / Rd)).